Reading from the N-terminus, the 178-residue chain is Probable chorismate pyruvate-lyase (178 aa).

Residues R72, L110, and E169 each coordinate substrate.

This sequence belongs to the UbiC family.

It localises to the cytoplasm. The enzyme catalyses chorismate = 4-hydroxybenzoate + pyruvate. It functions in the pathway cofactor biosynthesis; ubiquinone biosynthesis. Its function is as follows. Removes the pyruvyl group from chorismate, with concomitant aromatization of the ring, to provide 4-hydroxybenzoate (4HB) for the ubiquinone pathway. The chain is Probable chorismate pyruvate-lyase from Nitrosomonas europaea (strain ATCC 19718 / CIP 103999 / KCTC 2705 / NBRC 14298).